The sequence spans 362 residues: Class I histocompatibility antigen, Gogo-B*0102 alpha chain (362 aa).

An N-terminal signal peptide occupies residues 1 to 24 (MRVTAPRTLLLLLSAALALTETWA). Residues 25 to 114 (GSHSMRYFDT…ALRYYNQSEA (90 aa)) form an alpha-1 region. Residues 25-308 (GSHSMRYFDT…EPSSQSTIPI (284 aa)) are Extracellular-facing. N110 carries an N-linked (GlcNAc...) asparagine glycan. The segment at 115-206 (GSHTFQRMFG…ENGRETLQRA (92 aa)) is alpha-2. 2 disulfides stabilise this stretch: C125–C188 and C227–C283. The alpha-3 stretch occupies residues 207–298 (DTPKTHVTHH…GLPKPLTLRW (92 aa)). In terms of domain architecture, Ig-like C1-type spans 209-295 (PKTHVTHHPI…QHEGLPKPLT (87 aa)). The tract at residues 299–308 (EPSSQSTIPI) is connecting peptide. Residues 309–332 (VGIVAGLAVLAVVVIGAVVTAVIC) traverse the membrane as a helical segment. Residues 333 to 362 (RRKSSGGKGGSYSQAASSDSAQGSDVSLTA) are Cytoplasmic-facing. The disordered stretch occupies residues 335-362 (KSSGGKGGSYSQAASSDSAQGSDVSLTA). The span at 343-362 (SYSQAASSDSAQGSDVSLTA) shows a compositional bias: low complexity.

The protein belongs to the MHC class I family. Heterodimer of an alpha chain and a beta chain (beta-2-microglobulin).

It is found in the membrane. Functionally, involved in the presentation of foreign antigens to the immune system. In Gorilla gorilla gorilla (Western lowland gorilla), this protein is Class I histocompatibility antigen, Gogo-B*0102 alpha chain.